The primary structure comprises 463 residues: Cytidylate cyclase (463 aa).

The 110-residue stretch at 122-231 folds into the Guanylate cyclase domain; it reads VTMFMDIIGS…IGIRIGIDLG (110 aa). An a ribonucleoside 5'-triphosphate-binding site is contributed by Phe-125. Positions 127, 128, and 171 each coordinate Mn(2+). The AGS-C domain stretch occupies residues 334–454; that stretch reads KPSRIKVVIS…VISNDTVIER (121 aa).

This sequence belongs to the adenylyl cyclase class-4/guanylyl cyclase family. Pyrimidine cyclase subfamily. In terms of assembly, homodimer. Mn(2+) is required as a cofactor.

The protein localises to the cytoplasm. The catalysed reaction is CTP = 3',5'-cyclic CMP + diphosphate. In terms of biological role, pycsar (pyrimidine cyclase system for antiphage resistance) provides immunity against bacteriophage. The pyrimidine cyclase (PycC) synthesizes cyclic nucleotides in response to infection; these serve as specific second messenger signals. The signal activates the adjacent effector, leading to bacterial cell death and abortive phage infection. A clade E Pycsar system. The pyrimidine cyclase gene of a two-gene Pycsar system, generates cyclic CMP (cCMP) from CTP in response to bacteriophage infection. Has little to no activity on ATP, GTP or UTP. Expression of this and adjacent effector Ec303145PycTM (AC P0DV27) confers resistance to bacteriophage P1, T5, lambda-vir and phi27. The sequence is that of Cytidylate cyclase from Escherichia coli.